The primary structure comprises 100 residues: Large ribosomal subunit protein uL23 (100 aa).

It belongs to the universal ribosomal protein uL23 family. Part of the 50S ribosomal subunit. Contacts protein L29, and trigger factor when it is bound to the ribosome.

In terms of biological role, one of the early assembly proteins it binds 23S rRNA. One of the proteins that surrounds the polypeptide exit tunnel on the outside of the ribosome. Forms the main docking site for trigger factor binding to the ribosome. This Pectobacterium atrosepticum (strain SCRI 1043 / ATCC BAA-672) (Erwinia carotovora subsp. atroseptica) protein is Large ribosomal subunit protein uL23.